Consider the following 324-residue polypeptide: Formimidoylglutamase (324 aa).

Residues histidine 124, aspartate 153, histidine 155, aspartate 157, aspartate 245, and aspartate 247 each coordinate Mn(2+).

It belongs to the arginase family. It depends on Mn(2+) as a cofactor.

The catalysed reaction is N-formimidoyl-L-glutamate + H2O = formamide + L-glutamate. Its pathway is amino-acid degradation; L-histidine degradation into L-glutamate; L-glutamate from N-formimidoyl-L-glutamate (hydrolase route): step 1/1. Functionally, catalyzes the conversion of N-formimidoyl-L-glutamate to L-glutamate and formamide. The polypeptide is Formimidoylglutamase (Hahella chejuensis (strain KCTC 2396)).